The chain runs to 339 residues: Uroporphyrinogen decarboxylase (339 aa).

Residues 21–25, aspartate 71, tyrosine 146, serine 201, and histidine 316 contribute to the substrate site; that span reads RQAGR.

The protein belongs to the uroporphyrinogen decarboxylase family. In terms of assembly, homodimer.

It localises to the cytoplasm. It catalyses the reaction uroporphyrinogen III + 4 H(+) = coproporphyrinogen III + 4 CO2. It participates in porphyrin-containing compound metabolism; protoporphyrin-IX biosynthesis; coproporphyrinogen-III from 5-aminolevulinate: step 4/4. Its function is as follows. Catalyzes the decarboxylation of four acetate groups of uroporphyrinogen-III to yield coproporphyrinogen-III. This chain is Uroporphyrinogen decarboxylase, found in Rickettsia canadensis (strain McKiel).